We begin with the raw amino-acid sequence, 642 residues long: Influenza virus NS1A-binding protein (642 aa).

Residues 1 to 131 (MIPNGYLMFE…GDYLLSRMDV (131 aa)) enclose the BTB domain. Positions 132–350 (TSCISYRNFA…MQQDELIEKP (219 aa)) constitute a BACK domain. The sufficient for AHR interaction and signaling stretch occupies residues 164–368 (ISEEEEFLKL…SGLGTAEMNG (205 aa)). Phosphoserine occurs at positions 246, 277, 322, 336, and 338. Residues 257–281 (KPPRENGHKQISSSSTGCLSSPNAT) are disordered. Positions 265–281 (KQISSSSTGCLSSPNAT) are enriched in polar residues. Kelch repeat units lie at residues 384–421 (TVECYNPHTDHWSFLAPMRTPRARFQMAVLMGQLYVVG), 432–469 (CGEMYDSNIDDWIPVPELRTNRCNAGVCALNGKLYIVG), 481–518 (NCDVFDPVTKLWTSCAPLNIRRHQSAVCELGGYLYIIG), 527–565 (NTVERYNPENNTWTLIAPMNVARRGAGVAVLNGKLFVCG), 575–612 (CVEMYDPTRNEWKMMGNMTSPRSNAGIATVGNTIYAVG), and 622–642 (TVEVYNLESNEWSPYTKIFQF).

It belongs to the BTB-kelch protein family. In terms of assembly, homodimer; through the BTB domain. Interacts with AHR/Aryl hydrocarbon receptor. Interacts (via BACK domain) with pre-mRNA-binding protein HNRNPK; the interaction is direct. Interacts (via BACK domain) with splicing factor PTBP1; the interaction is direct. Interacts (via Kelch repeats) with RNA polymerase POLR2A (via C-terminal domain). Interacts (via BACK domain) with splicing factor SNRPA; the interaction is indirect. Interacts (via Kelch repeats) with splicing factor SART1. Interacts (via BACK domain) with ALYREF; the interaction is indirect and likely plays a role in mRNA nuclear export. Interacts (via Kelch repeats) with KLHL20 (via Kelch repeats); this interaction blocks the assembly of Cul3-KLHL20 complex. As to quaternary structure, (Microbial infection) Interacts (via BACK domain) with influenza A virus non-structural protein 1 (NS1); the interaction is direct and bridges the interaction between NS1 and HNRNPK.

It localises to the cytoplasm. The protein resides in the cytoskeleton. It is found in the nucleus. Its subcellular location is the nucleoplasm. Functionally, involved in many cell functions, including pre-mRNA splicing, the aryl hydrocarbon receptor (AHR) pathway, F-actin organization and protein ubiquitination. Plays a role in the dynamic organization of the actin skeleton as a stabilizer of actin filaments by association with F-actin through Kelch repeats. Protects cells from cell death induced by actin destabilization. Functions as modifier of the AHR/Aryl hydrocarbon receptor pathway increasing the concentration of AHR available to activate transcription. In addition, functions as a negative regulator of BCR(KLHL20) E3 ubiquitin ligase complex to prevent ubiquitin-mediated proteolysis of PML and DAPK1, two tumor suppressors. Inhibits pre-mRNA splicing (in vitro). May play a role in mRNA nuclear export. (Microbial infection) Involved in the alternative splicing of influenza A virus M1 mRNA through interaction with HNRNPK, thereby facilitating the generation of viral M2 protein. The BTB and Kelch domains are required for splicing activity. Promotes export of viral M mRNA and RNP via its interaction with mRNA export factor ALYREF. This chain is Influenza virus NS1A-binding protein, found in Homo sapiens (Human).